Consider the following 473-residue polypeptide: Glutamate--tRNA ligase (473 aa).

Positions 11-21 (PSPTGFLHIGG) match the 'HIGH' region motif. Residues 240 to 244 (KLSKR) carry the 'KMSKS' region motif. Lys243 serves as a coordination point for ATP.

This sequence belongs to the class-I aminoacyl-tRNA synthetase family. Glutamate--tRNA ligase type 1 subfamily. As to quaternary structure, monomer.

It localises to the cytoplasm. It carries out the reaction tRNA(Glu) + L-glutamate + ATP = L-glutamyl-tRNA(Glu) + AMP + diphosphate. Functionally, catalyzes the attachment of glutamate to tRNA(Glu) in a two-step reaction: glutamate is first activated by ATP to form Glu-AMP and then transferred to the acceptor end of tRNA(Glu). The chain is Glutamate--tRNA ligase from Afipia carboxidovorans (strain ATCC 49405 / DSM 1227 / KCTC 32145 / OM5) (Oligotropha carboxidovorans).